We begin with the raw amino-acid sequence, 239 residues long: Pyridoxine 5'-phosphate synthase (239 aa).

Asn7 is a binding site for 3-amino-2-oxopropyl phosphate. 1-deoxy-D-xylulose 5-phosphate is bound at residue 9–10; it reads DH. A 3-amino-2-oxopropyl phosphate-binding site is contributed by Arg18. Catalysis depends on His43, which acts as the Proton acceptor. Arg45 and His50 together coordinate 1-deoxy-D-xylulose 5-phosphate. The active-site Proton acceptor is the Glu70. Position 100 (Thr100) interacts with 1-deoxy-D-xylulose 5-phosphate. The active-site Proton donor is the His191. Residues Gly192 and 213-214 contribute to the 3-amino-2-oxopropyl phosphate site; that span reads GH.

It belongs to the PNP synthase family. As to quaternary structure, homooctamer; tetramer of dimers.

The protein resides in the cytoplasm. The enzyme catalyses 3-amino-2-oxopropyl phosphate + 1-deoxy-D-xylulose 5-phosphate = pyridoxine 5'-phosphate + phosphate + 2 H2O + H(+). It participates in cofactor biosynthesis; pyridoxine 5'-phosphate biosynthesis; pyridoxine 5'-phosphate from D-erythrose 4-phosphate: step 5/5. Catalyzes the complicated ring closure reaction between the two acyclic compounds 1-deoxy-D-xylulose-5-phosphate (DXP) and 3-amino-2-oxopropyl phosphate (1-amino-acetone-3-phosphate or AAP) to form pyridoxine 5'-phosphate (PNP) and inorganic phosphate. This is Pyridoxine 5'-phosphate synthase from Citrifermentans bemidjiense (strain ATCC BAA-1014 / DSM 16622 / JCM 12645 / Bem) (Geobacter bemidjiensis).